The sequence spans 244 residues: Adiponectin (244 aa).

An N-terminal signal peptide occupies residues 1-18 (MLLLGAVLLLLALPGHDQ). Residues Thr21 and Thr22 are each glycosylated (O-linked (GalNAc...) threonine). Lys33 carries the post-translational modification 5-hydroxylysine. The residue at position 36 (Cys36) is an S-(2-succinyl)cysteine. The interval 40 to 101 (MAGIPGHPGH…RGFPGIQGRK (62 aa)) is disordered. Residues 42-107 (GIPGHPGHNG…QGRKGEPGEG (66 aa)) form the Collagen-like domain. Pro44, Pro47, and Pro53 each carry 4-hydroxyproline. Residues 55-70 (RDGRDGTPGEKGEKGD) are compositionally biased toward basic and acidic residues. 5-hydroxylysine occurs at positions 65 and 68. O-linked (Gal...) hydroxylysine; partial glycans are attached at residues Lys65 and Lys68. A 4-hydroxyproline; partial mark is found at Pro71 and Pro76. The residue at position 77 (Lys77) is a 5-hydroxylysine. O-linked (Gal...) hydroxylysine; partial glycosylation occurs at Lys77. Pro91 bears the 4-hydroxyproline mark. 4-hydroxyproline; partial is present on Pro95. Lys101 carries the post-translational modification 5-hydroxylysine. Lys101 carries an O-linked (Gal...) hydroxylysine; partial glycan. A C1q domain is found at 108–244 (AYVYRSAFSV…TGFLLYHDTN (137 aa)).

In terms of assembly, homomultimer. Forms trimers, hexamers and 12- to 18-mers. The trimers (low molecular weight complexes / LMW) are assembled via non-covalent interactions of the collagen-like domains in a triple helix and hydrophobic interactions within the globular C1q domain. Several trimers can associate to form disulfide-linked hexamers (middle molecular weight complexes / MMW) and larger complexes (higher molecular weight / HMW). The HMW-complex assembly is also modulated by the degree of lysine hydroxylation and glycosylation. LMW, MMW and HMW complexes bind to HBEGF, MMW and HMW complexes bind to PDGFB, and HMW complex binds to FGF2. Interacts with CTRP9 via the C1q domain (heterotrimeric complex). HMW complexes are more extensively glycosylated than smaller oligomers. Hydroxylation and glycosylation of the lysine residues within the collagen-like domain of adiponectin seem to be critically involved in regulating the formation and/or secretion of HMW complexes and consequently contribute to the insulin-sensitizing activity of adiponectin in hepatocytes. In terms of processing, O-glycosylated. Not N-glycosylated. O-linked glycans on hydroxylysines consist of Glc-Gal disaccharides bound to the oxygen atom of post-translationally added hydroxyl groups. Sialylated to varying degrees depending on tissue. Thr-22 appears to be the major site of sialylation. Higher sialylation found in SGBS adipocytes than in HEK fibroblasts. Sialylation is not required neither for heterodimerization nor for secretion. Not sialylated on the glycosylated hydroxylysines. Desialylated forms are rapidly cleared from the circulation. Post-translationally, succination of Cys-36 by the Krebs cycle intermediate fumarate, which leads to S-(2-succinyl)cysteine residues, inhibits polymerization and secretion of adiponectin. Adiponectin is a major target for succination in both adipocytes and adipose tissue of diabetic mammals. It was proposed that succination of proteins is a biomarker of mitochondrial stress and accumulation of Krebs cycle intermediates in adipose tissue in diabetes and that succination of adiponectin may contribute to the decrease in plasma adiponectin in diabetes. As to expression, synthesized exclusively by adipocytes and secreted into plasma.

The protein localises to the secreted. With respect to regulation, polymerization and secretion of adiponectin is inhibited by succination of cysteine residues by the Krebs cycle intermediate fumarate, which leads to S-(2-succinyl)cysteine residues. Important adipokine involved in the control of fat metabolism and insulin sensitivity, with direct anti-diabetic, anti-atherogenic and anti-inflammatory activities. Stimulates AMPK phosphorylation and activation in the liver and the skeletal muscle, enhancing glucose utilization and fatty-acid combustion. Antagonizes TNF-alpha by negatively regulating its expression in various tissues such as liver and macrophages, and also by counteracting its effects. Inhibits endothelial NF-kappa-B signaling through a cAMP-dependent pathway. May play a role in cell growth, angiogenesis and tissue remodeling by binding and sequestering various growth factors with distinct binding affinities, depending on the type of complex, LMW, MMW or HMW. The polypeptide is Adiponectin (ADIPOQ) (Homo sapiens (Human)).